Reading from the N-terminus, the 443-residue chain is Deoxyguanosinetriphosphate triphosphohydrolase-like protein (443 aa).

The region spanning 66–259 (RLTHSLEAAQ…MELADDIAYG (194 aa)) is the HD domain.

Belongs to the dGTPase family. Type 2 subfamily.

The protein is Deoxyguanosinetriphosphate triphosphohydrolase-like protein of Vibrio vulnificus (strain CMCP6).